Consider the following 254-residue polypeptide: Pimeloyl-[acyl-carrier protein] methyl ester esterase (254 aa).

Positions 14–242 (LVLLHGWGMN…ASHAPFISHP (229 aa)) constitute an AB hydrolase-1 domain. Substrate-binding positions include Trp20, 82–83 (SL), and 143–147 (FLAIQ). Ser82 acts as the Nucleophile in catalysis. Active-site residues include Asp207 and His235. Substrate is bound at residue His235.

Belongs to the AB hydrolase superfamily. Carboxylesterase BioH family. As to quaternary structure, monomer.

It is found in the cytoplasm. The catalysed reaction is 6-carboxyhexanoyl-[ACP] methyl ester + H2O = 6-carboxyhexanoyl-[ACP] + methanol + H(+). Its pathway is cofactor biosynthesis; biotin biosynthesis. Its function is as follows. The physiological role of BioH is to remove the methyl group introduced by BioC when the pimeloyl moiety is complete. It allows to synthesize pimeloyl-ACP via the fatty acid synthetic pathway through the hydrolysis of the ester bonds of pimeloyl-ACP esters. This chain is Pimeloyl-[acyl-carrier protein] methyl ester esterase, found in Aeromonas hydrophila subsp. hydrophila (strain ATCC 7966 / DSM 30187 / BCRC 13018 / CCUG 14551 / JCM 1027 / KCTC 2358 / NCIMB 9240 / NCTC 8049).